Reading from the N-terminus, the 725-residue chain is Phosphoribosylformylglycinamidine synthase subunit PurL (725 aa).

Residue H42 is part of the active site. Residues Y45 and K84 each coordinate ATP. E86 lines the Mg(2+) pocket. Residues 87–90 (SHNH) and R109 each bind substrate. H88 (proton acceptor) is an active-site residue. D110 contacts Mg(2+). Substrate is bound at residue Q237. D265 serves as a coordination point for Mg(2+). Residue 309–311 (ESQ) participates in substrate binding. The ATP site is built by D491 and G528. N529 is a binding site for Mg(2+). Residue S531 coordinates substrate.

This sequence belongs to the FGAMS family. In terms of assembly, monomer. Part of the FGAM synthase complex composed of 1 PurL, 1 PurQ and 2 PurS subunits.

The protein resides in the cytoplasm. The catalysed reaction is N(2)-formyl-N(1)-(5-phospho-beta-D-ribosyl)glycinamide + L-glutamine + ATP + H2O = 2-formamido-N(1)-(5-O-phospho-beta-D-ribosyl)acetamidine + L-glutamate + ADP + phosphate + H(+). The protein operates within purine metabolism; IMP biosynthesis via de novo pathway; 5-amino-1-(5-phospho-D-ribosyl)imidazole from N(2)-formyl-N(1)-(5-phospho-D-ribosyl)glycinamide: step 1/2. Its function is as follows. Part of the phosphoribosylformylglycinamidine synthase complex involved in the purines biosynthetic pathway. Catalyzes the ATP-dependent conversion of formylglycinamide ribonucleotide (FGAR) and glutamine to yield formylglycinamidine ribonucleotide (FGAM) and glutamate. The FGAM synthase complex is composed of three subunits. PurQ produces an ammonia molecule by converting glutamine to glutamate. PurL transfers the ammonia molecule to FGAR to form FGAM in an ATP-dependent manner. PurS interacts with PurQ and PurL and is thought to assist in the transfer of the ammonia molecule from PurQ to PurL. This Campylobacter lari (strain RM2100 / D67 / ATCC BAA-1060) protein is Phosphoribosylformylglycinamidine synthase subunit PurL.